An 835-amino-acid polypeptide reads, in one-letter code: Toll-like receptor 4 (835 aa).

The signal sequence occupies residues 1 to 25 (MMPLLHLAGTLIMALFLSCLRPGSL). Residues 26–638 (NPCIEVLPNI…KTIISVSVVS (613 aa)) are Extracellular-facing. Residues cysteine 28 and cysteine 39 are joined by a disulfide bond. Residues asparagine 34, asparagine 43, and asparagine 75 are each glycosylated (N-linked (GlcNAc...) asparagine). LRR repeat units lie at residues 54-75 (STKN…SFTN), 78-99 (QLQW…AWHG), 102-123 (QLST…SFSG), 126-147 (NLEN…HIGQ), and 150-171 (SLKK…EYFS). Asparagine 172 carries N-linked (GlcNAc...) asparagine glycosylation. LRR repeat units follow at residues 175–198 (NLEH…QFLR), 204–224 (NLSL…AFQG), and 226–247 (RLHE…MCLQ). N-linked (GlcNAc...) asparagine glycans are attached at residues asparagine 204, asparagine 237, asparagine 248, asparagine 281, and asparagine 307. Cysteine 280 and cysteine 304 form a disulfide bridge. One copy of the LRR 9 repeat lies at 372–381 (SLRYLDLSRN). The cysteines at positions 388 and 389 are disulfide-linked. LRR repeat units follow at residues 398-420 (NLKY…MGLE), 421-442 (ELEY…SVFL), 446-467 (KLLY…IFLG), and 470-491 (SLNT…NVFT). Residues asparagine 492, asparagine 495, and asparagine 524 are each glycosylated (N-linked (GlcNAc...) asparagine). LRR repeat units lie at residues 495-516 (NLTF…VFDT), 519-540 (RLQL…HYKQ), and 543-564 (SLRT…LQHF). N-linked (GlcNAc...) asparagine glycans are attached at residues asparagine 572 and asparagine 575. Residues 576–627 (NSVACICEYQNFLQWVKDQKMFLVNVEQMKCASPIDMKASLVLDFTNSTCYI) form the LRRCT domain. Cystine bridges form between cysteine 580/cysteine 606 and cysteine 582/cysteine 625. N-linked (GlcNAc...) asparagine glycosylation occurs at asparagine 622. The chain crosses the membrane as a helical span at residues 639–659 (VLVVATVAFLIYHFYFHLILI). Residues 660 to 835 (AGCKKYSRGE…EEEQEATTLT (176 aa)) lie on the Cytoplasmic side of the membrane. One can recognise a TIR domain in the interval 670–813 (SIYDAFVIYS…IFWRRLKKAL (144 aa)).

The protein belongs to the Toll-like receptor family. In terms of assembly, belongs to the lipopolysaccharide (LPS) receptor, a multi-protein complex containing at least CD14, LY96 and TLR4. Binding to bacterial LPS leads to homodimerization. Interacts with LY96 via the extracellular domain. Interacts with MYD88 and TIRAP via their respective TIR domains. Interacts with TICAM2. Interacts with NOX4. Interacts with CNPY3 and HSP90B1; this interaction is required for proper folding in the endoplasmic reticulum. Interacts with MAP3K21; this interaction leads to negative regulation of TLR4 signaling. Interacts with CD36, following CD36 stimulation by oxLDL or amyloid-beta 42, and forms a heterodimer with TLR6. The trimeric complex is internalized and triggers inflammatory response. LYN kinase activity facilitates TLR4-TLR6 heterodimerization and signal initiation. Interacts with TICAM1 in response to LPS in a WDFY1-dependent manner. Interacts with WDFY1 in response to LPS. Interacts with SMPDL3B. Interacts with CEACAM1; upon lipopolysaccharide stimulation, forms a complex including TLR4 and the phosphorylated form of SYK and CEACAM1, which in turn, recruits PTPN6 that dephosphorylates SYK, reducing the production of reactive oxygen species (ROS) and lysosome disruption, which in turn, reduces the activity of the inflammasome. Interacts with RFTN1; the interaction occurs in response to lipopolysaccharide stimulation. Interacts with SCIMP; the interaction occurs in response to lipopolysaccharide stimulation and is enhanced by phosphorylation of SCIMP by LYN. This interaction facilitates the phosphorylation of TLR4 by LYN which elicits a selective cytokine response in macrophages. Interacts with TRAF3IP3. Interacts with TREM1; this interaction enhances TLR4-mediated inflammatory response. Interacts with ZG16B/PAUF. Interacts with CD82; this interaction inhibits TLR4-mediated signaling pathway. Phosphorylated on tyrosine residues by LYN after binding lipopolysaccharide. In terms of processing, ubiquitinated by RNF128 via 'Lys-28'-linked polyubiquitin chains, leading to proteasomal degradation.

It is found in the cell membrane. Its subcellular location is the early endosome. It localises to the cell projection. The protein localises to the ruffle. Its function is as follows. Transmembrane receptor that functions as a pattern recognition receptor recognizing pathogen- and damage-associated molecular patterns (PAMPs and DAMPs) to induce innate immune responses via downstream signaling pathways. At the plasma membrane, cooperates with LY96 to mediate the innate immune response to bacterial lipopolysaccharide (LPS). Also involved in LPS-independent inflammatory responses triggered by free fatty acids, such as palmitate, and Ni(2+). Mechanistically, acts via MYD88, TIRAP and TRAF6, leading to NF-kappa-B activation, cytokine secretion and the inflammatory response. Alternatively, CD14-mediated TLR4 internalization via endocytosis is associated with the initiation of a MYD88-independent signaling via the TICAM1-TBK1-IRF3 axis leading to type I interferon production. In addition to the secretion of proinflammatory cytokines, initiates the activation of NLRP3 inflammasome and formation of a positive feedback loop between autophagy and NF-kappa-B signaling cascade. In complex with TLR6, promotes inflammation in monocytes/macrophages by associating with TLR6 and the receptor CD86. Upon ligand binding, such as oxLDL or amyloid-beta 42, the TLR4:TLR6 complex is internalized and triggers inflammatory response, leading to NF-kappa-B-dependent production of CXCL1, CXCL2 and CCL9 cytokines, via MYD88 signaling pathway, and CCL5 cytokine, via TICAM1 signaling pathway. In myeloid dendritic cells, vesicular stomatitis virus glycoprotein G but not LPS promotes the activation of IRF7, leading to type I IFN production in a CD14-dependent manner. This chain is Toll-like receptor 4 (Tlr4), found in Rattus norvegicus (Rat).